The sequence spans 426 residues: MLDSTTLFADACRFIPGGVNSPVRAFRGVGGTPVFVDRAEGPYVYGVDGKAYIDYVGSWGPMILGHAHPEVLTAVHAAVDRGLSYGAPTVAETAMAKTVCALMPSLDRVRMVSSGTEATMSAIRLARGYTGRDKIVKFEGCYHGHSDSLLVKAGSGALTLGAPSSPGVPANLAEHTLVLPYNDAAAVRDVFARHGAEIACIIVEPVAGNMNCVPPVPGFLETLRDVCDASGAVLIFDEVMTGFRVALGGAQAHYGICPDLTTLGKVIGGGMPVGAFGGRLDIMEQLAPVGQVYQAGTLSGNPVAMAAGLKTLELISQPKFFDELAEKTRHLAEGLRVRAEQAGIPLCVNWVGGMFGLFFTEQQGVSRFDQVMACDQERFRRFFHGMLEEGVYLAPSAFEAGFVSAAHDYQILDRTLTAAERVFAGL.

At Lys265 the chain carries N6-(pyridoxal phosphate)lysine.

It belongs to the class-III pyridoxal-phosphate-dependent aminotransferase family. HemL subfamily. As to quaternary structure, homodimer. It depends on pyridoxal 5'-phosphate as a cofactor.

Its subcellular location is the cytoplasm. It carries out the reaction (S)-4-amino-5-oxopentanoate = 5-aminolevulinate. It functions in the pathway porphyrin-containing compound metabolism; protoporphyrin-IX biosynthesis; 5-aminolevulinate from L-glutamyl-tRNA(Glu): step 2/2. In Methylococcus capsulatus (strain ATCC 33009 / NCIMB 11132 / Bath), this protein is Glutamate-1-semialdehyde 2,1-aminomutase.